The primary structure comprises 383 residues: 8-amino-7-oxononanoate synthase (383 aa).

Residue Arg-21 participates in substrate binding. A pyridoxal 5'-phosphate-binding site is contributed by 108–109 (GF). Residue His-133 coordinates substrate. Residues Ser-179, His-207, and Thr-233 each contribute to the pyridoxal 5'-phosphate site. An N6-(pyridoxal phosphate)lysine modification is found at Lys-236. Thr-350 serves as a coordination point for substrate.

The protein belongs to the class-II pyridoxal-phosphate-dependent aminotransferase family. BioF subfamily. Homodimer. Requires pyridoxal 5'-phosphate as cofactor.

It catalyses the reaction 6-carboxyhexanoyl-[ACP] + L-alanine + H(+) = (8S)-8-amino-7-oxononanoate + holo-[ACP] + CO2. It functions in the pathway cofactor biosynthesis; biotin biosynthesis. Catalyzes the decarboxylative condensation of pimeloyl-[acyl-carrier protein] and L-alanine to produce 8-amino-7-oxononanoate (AON), [acyl-carrier protein], and carbon dioxide. This chain is 8-amino-7-oxononanoate synthase, found in Yersinia enterocolitica serotype O:8 / biotype 1B (strain NCTC 13174 / 8081).